The chain runs to 214 residues: Putative AgrB-like protein 2 (214 aa).

The next 5 helical transmembrane spans lie at 41-61, 83-103, 109-129, 154-174, and 179-199; these read IISV…LIFL, TLLG…SFFA, LVVF…FKFA, ILTI…NSGW, and PVML…TYIG.

It belongs to the AgrB family.

It localises to the cell membrane. May be involved in the proteolytic processing of a quorum sensing system signal molecule precursor. This chain is Putative AgrB-like protein 2, found in Clostridium perfringens (strain 13 / Type A).